We begin with the raw amino-acid sequence, 164 residues long: MTTFLGNPVTFTGKQLQVGDIAKDFLLIATDLSQKSLKDFEGKKKVISVVPSIDTGICSKQTRTFNEELSELDNTVVITVSMDLPFAQKRWCSAEGLDNVILLSDFYDHSFGQEYALLMNEWHLLTRAVLILDEHNKVTYTEYVDNVNSDVDYEAAINAAKILP.

Residues 16 to 162 form the Thioredoxin domain; the sequence is LQVGDIAKDF…YEAAINAAKI (147 aa). Catalysis depends on cysteine 58, which acts as the Cysteine sulfenic acid (-SOH) intermediate. The cysteines at positions 58 and 92 are disulfide-linked.

The protein belongs to the peroxiredoxin family. Tpx subfamily. In terms of assembly, homodimer.

It catalyses the reaction a hydroperoxide + [thioredoxin]-dithiol = an alcohol + [thioredoxin]-disulfide + H2O. Thiol-specific peroxidase that catalyzes the reduction of hydrogen peroxide and organic hydroperoxides to water and alcohols, respectively. Plays a role in cell protection against oxidative stress by detoxifying peroxides. This is Thiol peroxidase from Streptococcus agalactiae serotype V (strain ATCC BAA-611 / 2603 V/R).